Consider the following 880-residue polypeptide: Alanine--tRNA ligase (880 aa).

The Zn(2+) site is built by His566, His570, Cys668, and His672.

This sequence belongs to the class-II aminoacyl-tRNA synthetase family. It depends on Zn(2+) as a cofactor.

The protein resides in the cytoplasm. The catalysed reaction is tRNA(Ala) + L-alanine + ATP = L-alanyl-tRNA(Ala) + AMP + diphosphate. Functionally, catalyzes the attachment of alanine to tRNA(Ala) in a two-step reaction: alanine is first activated by ATP to form Ala-AMP and then transferred to the acceptor end of tRNA(Ala). Also edits incorrectly charged Ser-tRNA(Ala) and Gly-tRNA(Ala) via its editing domain. The sequence is that of Alanine--tRNA ligase from Nostoc sp. (strain PCC 7120 / SAG 25.82 / UTEX 2576).